The primary structure comprises 454 residues: Tubulin gamma chain (454 aa).

Residue 142–148 (AGGTGSG) participates in GTP binding.

It belongs to the tubulin family.

The protein resides in the cytoplasm. It is found in the cytoskeleton. The protein localises to the microtubule organizing center. Its subcellular location is the spindle pole body. Functionally, tubulin is the major constituent of microtubules. The gamma chain is found at microtubule organizing centers (MTOC) such as the spindle pole or the centrosome, suggesting that it is involved in the minus-end nucleation of microtubule assembly. Interacts physically with beta-tubulin and is involved in microtubule function. The polypeptide is Tubulin gamma chain (mipA) (Emericella nidulans (strain FGSC A4 / ATCC 38163 / CBS 112.46 / NRRL 194 / M139) (Aspergillus nidulans)).